A 435-amino-acid chain; its full sequence is Glutamate-1-semialdehyde 2,1-aminomutase (435 aa).

The residue at position 266 (Lys266) is an N6-(pyridoxal phosphate)lysine.

It belongs to the class-III pyridoxal-phosphate-dependent aminotransferase family. HemL subfamily. As to quaternary structure, homodimer. The cofactor is pyridoxal 5'-phosphate.

It is found in the cytoplasm. The enzyme catalyses (S)-4-amino-5-oxopentanoate = 5-aminolevulinate. The protein operates within porphyrin-containing compound metabolism; protoporphyrin-IX biosynthesis; 5-aminolevulinate from L-glutamyl-tRNA(Glu): step 2/2. This Coxiella burnetii (strain CbuG_Q212) (Coxiella burnetii (strain Q212)) protein is Glutamate-1-semialdehyde 2,1-aminomutase.